Reading from the N-terminus, the 438-residue chain is Choline monooxygenase, chloroplastic (438 aa).

Residues M1–N58 constitute a chloroplast transit peptide. The 108-residue stretch at W121–I228 folds into the Rieske domain. [2Fe-2S] cluster contacts are provided by C163, H165, C182, and H185. Residues H288 and H293 each coordinate Fe cation.

The protein belongs to the choline monooxygenase family. The cofactor is [2Fe-2S] cluster. Fe cation serves as cofactor. It depends on Mg(2+) as a cofactor. Expressed in roots and leaves.

The protein resides in the plastid. Its subcellular location is the chloroplast stroma. The catalysed reaction is choline + 2 reduced [2Fe-2S]-[ferredoxin] + O2 + 2 H(+) = betaine aldehyde hydrate + 2 oxidized [2Fe-2S]-[ferredoxin] + H2O. It functions in the pathway amine and polyamine biosynthesis; betaine biosynthesis via choline pathway; betaine aldehyde from choline (monooxygenase route): step 1/1. Its function is as follows. Catalyzes the first step of the osmoprotectant glycine betaine synthesis. This chain is Choline monooxygenase, chloroplastic (CMO), found in Atriplex hortensis (Mountain spinach).